The following is a 117-amino-acid chain: Hydrogenase maturation factor HypA (117 aa).

Residue His-2 participates in Ni(2+) binding. Residues Cys-73, Cys-76, Cys-90, and Cys-93 each coordinate Zn(2+).

Belongs to the HypA/HybF family.

Involved in the maturation of [NiFe] hydrogenases. Required for nickel insertion into the metal center of the hydrogenase. The protein is Hydrogenase maturation factor HypA of Pectobacterium atrosepticum (strain SCRI 1043 / ATCC BAA-672) (Erwinia carotovora subsp. atroseptica).